The sequence spans 263 residues: Undecaprenyl-diphosphatase (263 aa).

6 consecutive transmembrane segments (helical) span residues proline 40 to phenylalanine 60, leucine 87 to valine 107, alanine 109 to phenylalanine 129, phenylalanine 186 to tryptophan 206, alanine 219 to valine 239, and arginine 243 to serine 263.

This sequence belongs to the UppP family.

It is found in the cell inner membrane. It catalyses the reaction di-trans,octa-cis-undecaprenyl diphosphate + H2O = di-trans,octa-cis-undecaprenyl phosphate + phosphate + H(+). Functionally, catalyzes the dephosphorylation of undecaprenyl diphosphate (UPP). Confers resistance to bacitracin. In Syntrophotalea carbinolica (strain DSM 2380 / NBRC 103641 / GraBd1) (Pelobacter carbinolicus), this protein is Undecaprenyl-diphosphatase.